Reading from the N-terminus, the 318-residue chain is NADH-ubiquinone oxidoreductase chain 1 (318 aa).

8 helical membrane passes run 2–22 (FMIN…FLTL), 70–90 (MFIL…IPLP), 100–120 (LGVL…LWSG), 147–167 (AIIL…TLII), 172–192 (MWLI…TLAE), 222–242 (LFFM…AILF), 253–273 (ELYT…FLWI), and 294–314 (LPLT…TSGI).

This sequence belongs to the complex I subunit 1 family. Core subunit of respiratory chain NADH dehydrogenase (Complex I) which is composed of 45 different subunits.

It is found in the mitochondrion inner membrane. The catalysed reaction is a ubiquinone + NADH + 5 H(+)(in) = a ubiquinol + NAD(+) + 4 H(+)(out). Core subunit of the mitochondrial membrane respiratory chain NADH dehydrogenase (Complex I) which catalyzes electron transfer from NADH through the respiratory chain, using ubiquinone as an electron acceptor. Essential for the catalytic activity and assembly of complex I. This chain is NADH-ubiquinone oxidoreductase chain 1 (MT-ND1), found in Bos indicus (Zebu).